The sequence spans 155 residues: Ribonuclease H (155 aa).

The 142-residue stretch at 1–142 (MLKQVEIFTD…CDELARAAAS (142 aa)) folds into the RNase H type-1 domain. Mg(2+) is bound by residues Asp-10, Glu-48, Asp-70, and Asp-134.

The protein belongs to the RNase H family. In terms of assembly, monomer. The cofactor is Mg(2+).

It is found in the cytoplasm. The catalysed reaction is Endonucleolytic cleavage to 5'-phosphomonoester.. Functionally, endonuclease that specifically degrades the RNA of RNA-DNA hybrids. This chain is Ribonuclease H, found in Klebsiella pneumoniae subsp. pneumoniae (strain ATCC 700721 / MGH 78578).